The following is a 904-amino-acid chain: Putative pentatricopeptide repeat-containing protein At1g19290 (904 aa).

19 PPR repeats span residues 154–188 (SPTV…GRIP), 189–223 (SLLS…EVSP), 224–254 (DVFT…TESS), 260–294 (NVVT…GVSR), 295–329 (NVVT…KLVA), 330–364 (DQHM…GVRT), 365–399 (NTTI…SLKP), 400–434 (DHHT…EVVP), 435–469 (TVMT…GVNA), 470–504 (DEIS…GLLT), 505–539 (DTIT…RCKP), 540–574 (AVQT…GIFP), 575–609 (TIEM…GLTP), 610–644 (TVAT…GITL), 645–679 (NVNI…DLLL), 718–753 (NNIV…RFIP), 754–788 (DEYT…GIIP), 789–823 (NIVT…GITP), and 824–858 (NAIT…GLVR).

Belongs to the PPR family. P subfamily.

The chain is Putative pentatricopeptide repeat-containing protein At1g19290 from Arabidopsis thaliana (Mouse-ear cress).